The primary structure comprises 123 residues: Potassium voltage-gated channel subfamily E member 2 (123 aa).

N-linked (GlcNAc...) asparagine glycosylation is found at asparagine 6 and asparagine 29. The chain crosses the membrane as a helical span at residues 49–69 (VILYLMVMIGMFSFIIVAILV). The Cytoplasmic portion of the chain corresponds to 70–123 (STVKSKRREHSNDPYHQYIVEDWQEKYKSQILNLEESKATIHENIGAAGFKMSP).

The protein belongs to the potassium channel KCNE family. In terms of assembly, interacts with KCNB1. Associates with KCNH2/ERG1. May associate with KCNQ2 and KCNQ3. Associates with HCN1 and probably HCN2. Heteromultimer with KCNC2. Interacts with KCNC2. Interacts with KCNQ1; forms a heterooligomer complex that targets to the membrane raft and leading to currents with an apparently instantaneous activation, a rapid deactivation process and a linear current-voltage relationship and decreases the amplitude of the outward current. As to expression, highly expressed in brain, heart, skeletal muscle, pancreas, placenta, kidney, colon and thymus. A small but significant expression is found in liver, ovary, testis, prostate, small intestine and leukocytes. Very low expression, nearly undetectable, in lung and spleen.

Its subcellular location is the cell membrane. It localises to the apical cell membrane. In terms of biological role, ancillary protein that functions as a regulatory subunit of the voltage-gated potassium (Kv) channel complex composed of pore-forming and potassium-conducting alpha subunits and of regulatory beta subunits. KCNE2 beta subunit modulates the gating kinetics and enhances stability of the channel complex. Alters the gating of the delayed rectifier Kv channel containing KCNB1 alpha subunit. Associates with KCNH2/HERG alpha subunit Kv channel to form the rapidly activating component of the delayed rectifying potassium current (IKr) in heart. May associate with KCNQ2 and/or KCNQ3 alpha subunits to modulate the native M-type current. May associate with HCN1 and HCN2 channel subunits to increase potassium current. Forms a heterooligomer complex with KCNQ1/KVLQT1 alpha subunits which leads to currents with an apparently instantaneous activation, a rapid deactivation process and a linear current-voltage relationship and decreases the amplitude of the outward current. KCNQ1-KCNE2 channel associates with Na(+)-coupled myo-inositol symporter in the apical membrane of choroid plexus epithelium and regulates the myo-inositol gradient between blood and cerebrospinal fluid with an impact on neuron excitability. The chain is Potassium voltage-gated channel subfamily E member 2 from Homo sapiens (Human).